Reading from the N-terminus, the 330-residue chain is Ribosomal RNA small subunit methyltransferase H (330 aa).

S-adenosyl-L-methionine-binding positions include 50-52, Asp-69, Leu-103, Asp-117, and Gln-124; that span reads GGH.

This sequence belongs to the methyltransferase superfamily. RsmH family.

The protein localises to the cytoplasm. The catalysed reaction is cytidine(1402) in 16S rRNA + S-adenosyl-L-methionine = N(4)-methylcytidine(1402) in 16S rRNA + S-adenosyl-L-homocysteine + H(+). In terms of biological role, specifically methylates the N4 position of cytidine in position 1402 (C1402) of 16S rRNA. This chain is Ribosomal RNA small subunit methyltransferase H, found in Saccharopolyspora erythraea (strain ATCC 11635 / DSM 40517 / JCM 4748 / NBRC 13426 / NCIMB 8594 / NRRL 2338).